The primary structure comprises 303 residues: UDP-3-O-acyl-N-acetylglucosamine deacetylase (303 aa).

Residues His-78, His-237, and Asp-241 each coordinate Zn(2+). The Proton donor role is filled by His-264.

This sequence belongs to the LpxC family. The cofactor is Zn(2+).

The catalysed reaction is a UDP-3-O-[(3R)-3-hydroxyacyl]-N-acetyl-alpha-D-glucosamine + H2O = a UDP-3-O-[(3R)-3-hydroxyacyl]-alpha-D-glucosamine + acetate. It participates in glycolipid biosynthesis; lipid IV(A) biosynthesis; lipid IV(A) from (3R)-3-hydroxytetradecanoyl-[acyl-carrier-protein] and UDP-N-acetyl-alpha-D-glucosamine: step 2/6. Its function is as follows. Catalyzes the hydrolysis of UDP-3-O-myristoyl-N-acetylglucosamine to form UDP-3-O-myristoylglucosamine and acetate, the committed step in lipid A biosynthesis. The chain is UDP-3-O-acyl-N-acetylglucosamine deacetylase from Xanthomonas euvesicatoria pv. vesicatoria (strain 85-10) (Xanthomonas campestris pv. vesicatoria).